The primary structure comprises 594 residues: DNA ligase (594 aa).

NAD(+)-binding positions include 32 to 36, 81 to 82, and Glu118; these read DEEYD and SL. Lys120 acts as the N6-AMP-lysine intermediate in catalysis. NAD(+) is bound by residues Arg141, Glu181, Lys299, and Lys323. Zn(2+) is bound by residues Cys417, Cys420, Cys436, and Cys442.

This sequence belongs to the NAD-dependent DNA ligase family. LigA subfamily. It depends on Mg(2+) as a cofactor. The cofactor is Mn(2+).

The catalysed reaction is NAD(+) + (deoxyribonucleotide)n-3'-hydroxyl + 5'-phospho-(deoxyribonucleotide)m = (deoxyribonucleotide)n+m + AMP + beta-nicotinamide D-nucleotide.. Functionally, DNA ligase that catalyzes the formation of phosphodiester linkages between 5'-phosphoryl and 3'-hydroxyl groups in double-stranded DNA using NAD as a coenzyme and as the energy source for the reaction. It is essential for DNA replication and repair of damaged DNA. The protein is DNA ligase of Blochmanniella floridana.